The primary structure comprises 142 residues: Small ribosomal subunit protein uS12 (142 aa).

The protein belongs to the universal ribosomal protein uS12 family.

The sequence is that of Small ribosomal subunit protein uS12 from Tetrahymena thermophila.